A 105-amino-acid polypeptide reads, in one-letter code: MHIKKGDNVKVIAGKDKGKEGKVVATEPKKDRVVVEGVNVIKKHQKPTQLNPEGGILETEAAIHVSNVQLLDPKTNEPTRVGYKTVDGKKVRIAKKSGEEIKANN.

The protein belongs to the universal ribosomal protein uL24 family. In terms of assembly, part of the 50S ribosomal subunit.

One of two assembly initiator proteins, it binds directly to the 5'-end of the 23S rRNA, where it nucleates assembly of the 50S subunit. Functionally, one of the proteins that surrounds the polypeptide exit tunnel on the outside of the subunit. The sequence is that of Large ribosomal subunit protein uL24 from Staphylococcus epidermidis (strain ATCC 35984 / DSM 28319 / BCRC 17069 / CCUG 31568 / BM 3577 / RP62A).